The following is a 249-amino-acid chain: Probable transcriptional regulatory protein LBL_2537 (249 aa).

It belongs to the TACO1 family.

Its subcellular location is the cytoplasm. This Leptospira borgpetersenii serovar Hardjo-bovis (strain L550) protein is Probable transcriptional regulatory protein LBL_2537.